The primary structure comprises 140 residues: PDZ domain-containing protein 11 (140 aa).

Residues 47-129 form the PDZ domain; sequence IVTLKKPPGA…ISMRVRFFPY (83 aa).

Interacts with ATP2B1, ATP2B2, ATP2B3, ATP2B4 and ATP7A. Interacts with PLEKHA7 (via WW domains) at zonula adherens; this interaction is essential for the interaction between PLEKHA7 and the ADAM10-binding protein TSPAN33. Interacts with SLC5A6.

It is found in the cytoplasm. It localises to the cell junction. The protein localises to the adherens junction. The protein resides in the cell membrane. Its function is as follows. Mediates docking of ADAM10 to zonula adherens by interacting with PLEKHA7 which is required for PLEKHA7 to interact with the ADAM10-binding protein TSPAN33. In Mus musculus (Mouse), this protein is PDZ domain-containing protein 11 (Pdzd11).